A 63-amino-acid chain; its full sequence is U7-theraphotoxin-Cg1a (63 aa).

Residues 1 to 21 (MKTSILFVIFGLALLFALSVA) form the signal peptide. Positions 22–31 (IEMEEEETDR) are excised as a propeptide. 3 disulfide bridges follow: Cys-33/Cys-47, Cys-40/Cys-52, and Cys-46/Cys-59.

In terms of tissue distribution, expressed by the venom gland.

It is found in the secreted. Inhibits preferentially tetrodotoxin-insensitive sodium currents (Nav) on rat cardiac myocytes (IC(50) is 0.26 uM) and has weaker inhibition activity toward tetrodotoxin-sensitive sodium currents on rat dorsal root ganglion (DRG) sensory neurons (IC(50) is 0.83 uM) and on cockroach dorsal unpaired median (DUM) neurons (IC(50) is 1.19 uM). Has no significant effect on potassium currents on DRG neurons. This Chilobrachys guangxiensis (Chinese earth tiger tarantula) protein is U7-theraphotoxin-Cg1a.